A 251-amino-acid polypeptide reads, in one-letter code: Octanoyltransferase (251 aa).

In terms of domain architecture, BPL/LPL catalytic spans Asp49–Leu230. Residues Arg87 to His94, Ala160 to Gly162, and Gly173 to Ala175 each bind substrate. Catalysis depends on Cys191, which acts as the Acyl-thioester intermediate.

It belongs to the LipB family.

The protein localises to the cytoplasm. The catalysed reaction is octanoyl-[ACP] + L-lysyl-[protein] = N(6)-octanoyl-L-lysyl-[protein] + holo-[ACP] + H(+). It participates in protein modification; protein lipoylation via endogenous pathway; protein N(6)-(lipoyl)lysine from octanoyl-[acyl-carrier-protein]: step 1/2. Functionally, catalyzes the transfer of endogenously produced octanoic acid from octanoyl-acyl-carrier-protein onto the lipoyl domains of lipoate-dependent enzymes. Lipoyl-ACP can also act as a substrate although octanoyl-ACP is likely to be the physiological substrate. The protein is Octanoyltransferase of Corynebacterium efficiens (strain DSM 44549 / YS-314 / AJ 12310 / JCM 11189 / NBRC 100395).